We begin with the raw amino-acid sequence, 196 residues long: MRVVYSVEEVEIPKGVSVSIERTGPFDYIVKVKGPLGEVTKEFKNTPVVMSLQDGKIVMEVFKARKREYAILGTYKGILKNMFLGVTRGWRYKLKVIYTHFPMLVKVQGNQLVIENFLGRKSKITLNIPKGVKVEVKGKEDIVIEGIDRELVSTFAAAVQAATELHGDERPSPHGREGGLGVVDGIYVVGYEHIKS.

The protein belongs to the universal ribosomal protein uL6 family. In terms of assembly, part of the 50S ribosomal subunit.

Its function is as follows. This protein binds to the 23S rRNA, and is important in its secondary structure. It is located near the subunit interface in the base of the L7/L12 stalk, and near the tRNA binding site of the peptidyltransferase center. The protein is Large ribosomal subunit protein uL6 of Pyrobaculum aerophilum (strain ATCC 51768 / DSM 7523 / JCM 9630 / CIP 104966 / NBRC 100827 / IM2).